The primary structure comprises 92 residues: Integration host factor subunit beta (92 aa).

It belongs to the bacterial histone-like protein family. As to quaternary structure, heterodimer of an alpha and a beta chain.

In terms of biological role, this protein is one of the two subunits of integration host factor, a specific DNA-binding protein that functions in genetic recombination as well as in transcriptional and translational control. This Bartonella tribocorum (strain CIP 105476 / IBS 506) protein is Integration host factor subunit beta.